Reading from the N-terminus, the 120-residue chain is uncharacterized protein (120 aa).

The first 19 residues, 1–19 (MKKIVCAVVALLLTLPAWA), serve as a signal peptide directing secretion.

This is an uncharacterized protein from Salmonella typhimurium (strain LT2 / SGSC1412 / ATCC 700720).